Reading from the N-terminus, the 130-residue chain is Small ribosomal subunit protein uS8 (130 aa).

Belongs to the universal ribosomal protein uS8 family. As to quaternary structure, part of the 30S ribosomal subunit. Contacts proteins S5 and S12.

Functionally, one of the primary rRNA binding proteins, it binds directly to 16S rRNA central domain where it helps coordinate assembly of the platform of the 30S subunit. In Photorhabdus laumondii subsp. laumondii (strain DSM 15139 / CIP 105565 / TT01) (Photorhabdus luminescens subsp. laumondii), this protein is Small ribosomal subunit protein uS8.